The sequence spans 322 residues: Undecaprenyl-phosphate 4-deoxy-4-formamido-L-arabinose transferase (322 aa).

Over 1-235 (MFEIHPVKKV…TCLTTTPLRM (235 aa)) the chain is Cytoplasmic. The chain crosses the membrane as a helical span at residues 236–256 (LSLLGSIIAIGGFSIAVLLVI). At 257–269 (LRLTFGPQWAAEG) the chain is on the periplasmic side. The chain crosses the membrane as a helical span at residues 270–290 (VFMLFAVLFTFIGAQFIGMGL). Topologically, residues 291-322 (LGEYIGRIYTDVRARPRYFVQQVIRPSSKENE) are cytoplasmic.

The protein belongs to the glycosyltransferase 2 family.

The protein localises to the cell inner membrane. It carries out the reaction UDP-4-deoxy-4-formamido-beta-L-arabinose + di-trans,octa-cis-undecaprenyl phosphate = 4-deoxy-4-formamido-alpha-L-arabinopyranosyl di-trans,octa-cis-undecaprenyl phosphate + UDP. The protein operates within glycolipid biosynthesis; 4-amino-4-deoxy-alpha-L-arabinose undecaprenyl phosphate biosynthesis; 4-amino-4-deoxy-alpha-L-arabinose undecaprenyl phosphate from UDP-4-deoxy-4-formamido-beta-L-arabinose and undecaprenyl phosphate: step 1/2. It functions in the pathway bacterial outer membrane biogenesis; lipopolysaccharide biosynthesis. In terms of biological role, catalyzes the transfer of 4-deoxy-4-formamido-L-arabinose from UDP to undecaprenyl phosphate. The modified arabinose is attached to lipid A and is required for resistance to polymyxin and cationic antimicrobial peptides. This chain is Undecaprenyl-phosphate 4-deoxy-4-formamido-L-arabinose transferase, found in Escherichia coli O7:K1 (strain IAI39 / ExPEC).